Here is a 363-residue protein sequence, read N- to C-terminus: tRNA/tmRNA (uracil-C(5))-methyltransferase (363 aa).

S-adenosyl-L-methionine is bound by residues Q187, Y215, N220, E236, and D296. The active-site Nucleophile is C321. The active-site Proton acceptor is E355.

It belongs to the class I-like SAM-binding methyltransferase superfamily. RNA M5U methyltransferase family. TrmA subfamily.

The enzyme catalyses uridine(54) in tRNA + S-adenosyl-L-methionine = 5-methyluridine(54) in tRNA + S-adenosyl-L-homocysteine + H(+). It carries out the reaction uridine(341) in tmRNA + S-adenosyl-L-methionine = 5-methyluridine(341) in tmRNA + S-adenosyl-L-homocysteine + H(+). Its function is as follows. Dual-specificity methyltransferase that catalyzes the formation of 5-methyluridine at position 54 (m5U54) in all tRNAs, and that of position 341 (m5U341) in tmRNA (transfer-mRNA). This Haemophilus influenzae (strain PittEE) protein is tRNA/tmRNA (uracil-C(5))-methyltransferase.